Reading from the N-terminus, the 302-residue chain is Ectoine dioxygenase (302 aa).

Gln128 contacts L-ectoine. Lys134 is a binding site for 2-oxoglutarate. Residues His145, Asp147, and His246 each coordinate Fe cation.

It belongs to the PhyH family. EctD subfamily. Homodimer. The cofactor is Fe(2+).

The catalysed reaction is L-ectoine + 2-oxoglutarate + O2 = 5-hydroxyectoine + succinate + CO2. Its function is as follows. Involved in the biosynthesis of 5-hydroxyectoine, called compatible solute, which helps organisms to survive extreme osmotic stress by acting as a highly soluble organic osmolyte. Catalyzes the 2-oxoglutarate-dependent selective hydroxylation of L-ectoine to yield (4S,5S)-5-hydroxyectoine. The chain is Ectoine dioxygenase from Stutzerimonas stutzeri (strain A1501) (Pseudomonas stutzeri).